Here is a 363-residue protein sequence, read N- to C-terminus: MKPFPRAEISRKALQANLARIRELAPQSKIMAVVKANGYGHGLLNVANSVATYDQGADGFGLARLEEALELRSGGVNARLLLLEGFFRVTDLPLLVQHHIDTVVHHESQVEMLEQAELTTPVTVWMKIDTGMHRLGFSLAQFDAIYQRLLACHNIAKPIHLMTHFACSDEPDNSFTQAQIDAFESVTASLDGDRSLANSGGMLFWPQSQRDWIRAGIALYGVSPMVGDKGGNHGLVPAMELKSQLISVKDHQAGDSVGYGAFWRARKDTRIGVVAIGYGDGYPRHAPEGTPVWLNGRRVPIVGRVSMDMLTVDLGLDSQDKVGDEVLLWGSALAVEEVADHIGTIAYELVTKLTPRVAVALLP.

Catalysis depends on K35, which acts as the Proton acceptor; specific for D-alanine. K35 bears the N6-(pyridoxal phosphate)lysine mark. Residue R134 coordinates substrate. The Proton acceptor; specific for L-alanine role is filled by Y259. M307 contributes to the substrate binding site.

The protein belongs to the alanine racemase family. Pyridoxal 5'-phosphate serves as cofactor.

It carries out the reaction L-alanine = D-alanine. The protein operates within amino-acid biosynthesis; D-alanine biosynthesis; D-alanine from L-alanine: step 1/1. In terms of biological role, catalyzes the interconversion of L-alanine and D-alanine. May also act on other amino acids. The polypeptide is Alanine racemase (alr) (Shewanella denitrificans (strain OS217 / ATCC BAA-1090 / DSM 15013)).